The chain runs to 212 residues: Mediator of RNA polymerase II transcription subunit 20 (212 aa).

It belongs to the Mediator complex subunit 20 family. As to quaternary structure, component of the Mediator complex, which is composed of MED1, MED4, MED6, MED7, MED8, MED9, MED10, MED11, MED12, MED13, MED13L, MED14, MED15, MED16, MED17, MED18, MED19, MED20, MED21, MED22, MED23, MED24, MED25, MED26, MED27, MED29, MED30, MED31, CCNC, CDK8 and CDC2L6/CDK11. The MED12, MED13, CCNC and CDK8 subunits form a distinct module termed the CDK8 module. Mediator containing the CDK8 module is less active than Mediator lacking this module in supporting transcriptional activation. Individual preparations of the Mediator complex lacking one or more distinct subunits have been variously termed ARC, CRSP, DRIP, PC2, SMCC and TRAP. Interacts with PPARG.

The protein resides in the nucleus. In terms of biological role, component of the Mediator complex, a coactivator involved in the regulated transcription of nearly all RNA polymerase II-dependent genes. Mediator functions as a bridge to convey information from gene-specific regulatory proteins to the basal RNA polymerase II transcription machinery. Mediator is recruited to promoters by direct interactions with regulatory proteins and serves as a scaffold for the assembly of a functional preinitiation complex with RNA polymerase II and the general transcription factors. This chain is Mediator of RNA polymerase II transcription subunit 20 (Med20), found in Rattus norvegicus (Rat).